A 209-amino-acid polypeptide reads, in one-letter code: Large ribosomal subunit protein uL3 (209 aa).

The tract at residues 127–147 (YSRGPMGHGSKSHRVAGARSA) is disordered.

Belongs to the universal ribosomal protein uL3 family. Part of the 50S ribosomal subunit. Forms a cluster with proteins L14 and L19.

Its function is as follows. One of the primary rRNA binding proteins, it binds directly near the 3'-end of the 23S rRNA, where it nucleates assembly of the 50S subunit. This Finegoldia magna (strain ATCC 29328 / DSM 20472 / WAL 2508) (Peptostreptococcus magnus) protein is Large ribosomal subunit protein uL3.